Reading from the N-terminus, the 481-residue chain is Halobacterial transducer protein 9 (481 aa).

Residues 10-81 (SPFTVPLLLN…NKVADTPIDA (72 aa)) form the PAS domain. Positions 208–444 (DVERLEAASQ…EIAAMVDETA (237 aa)) constitute a Methyl-accepting transducer domain.

Belongs to the methyl-accepting chemotaxis (MCP) protein family.

The protein resides in the cytoplasm. Potentially involved in chemo- or phototactic signal transduction. The chain is Halobacterial transducer protein 9 (htr9) from Halobacterium salinarum (strain ATCC 700922 / JCM 11081 / NRC-1) (Halobacterium halobium).